Consider the following 931-residue polypeptide: Probable ubiquitin-like-specific protease 2B (931 aa).

Residues S204 to W224 form a disordered region. Over residues S215–W224 the composition is skewed to acidic residues. Active-site residues include H489, D522, and C577. The interval H825–K931 is disordered. Polar residues predominate over residues S839–D851. Over residues N873 to P904 the composition is skewed to basic and acidic residues.

It belongs to the peptidase C48 family.

Functionally, protease that catalyzes two essential functions in the SUMO pathway: processing of full-length SUMOs to their mature forms and deconjugation of SUMO from targeted proteins. This Arabidopsis thaliana (Mouse-ear cress) protein is Probable ubiquitin-like-specific protease 2B (ULP2B).